The following is a 305-amino-acid chain: Protoheme IX farnesyltransferase (305 aa).

The next 9 membrane-spanning stretches (helical) occupy residues 29-49, 55-75, 101-121, 123-143, 151-171, 177-197, 219-241, 246-268, and 283-303; these read LIVF…PGLA, LWAT…NCLI, ALIF…EAVN, LTAW…TVVL, IVIG…AMTG, GLIL…ALAL, FTRL…PFVQ, WLYL…RLWR, and IWHL…QDLL.

Belongs to the UbiA prenyltransferase family. Protoheme IX farnesyltransferase subfamily.

It localises to the cell inner membrane. It carries out the reaction heme b + (2E,6E)-farnesyl diphosphate + H2O = Fe(II)-heme o + diphosphate. It functions in the pathway porphyrin-containing compound metabolism; heme O biosynthesis; heme O from protoheme: step 1/1. In terms of biological role, converts heme B (protoheme IX) to heme O by substitution of the vinyl group on carbon 2 of heme B porphyrin ring with a hydroxyethyl farnesyl side group. The protein is Protoheme IX farnesyltransferase of Leptothrix cholodnii (strain ATCC 51168 / LMG 8142 / SP-6) (Leptothrix discophora (strain SP-6)).